We begin with the raw amino-acid sequence, 179 residues long: Large ribosomal subunit protein uL5 (179 aa).

It belongs to the universal ribosomal protein uL5 family. As to quaternary structure, part of the 50S ribosomal subunit; part of the 5S rRNA/L5/L18/L25 subcomplex. Contacts the 5S rRNA and the P site tRNA. Forms a bridge to the 30S subunit in the 70S ribosome.

In terms of biological role, this is one of the proteins that bind and probably mediate the attachment of the 5S RNA into the large ribosomal subunit, where it forms part of the central protuberance. In the 70S ribosome it contacts protein S13 of the 30S subunit (bridge B1b), connecting the 2 subunits; this bridge is implicated in subunit movement. Contacts the P site tRNA; the 5S rRNA and some of its associated proteins might help stabilize positioning of ribosome-bound tRNAs. The chain is Large ribosomal subunit protein uL5 from Buchnera aphidicola subsp. Acyrthosiphon pisum (strain APS) (Acyrthosiphon pisum symbiotic bacterium).